We begin with the raw amino-acid sequence, 123 residues long: U9-barytoxin-Tl1a (123 aa).

An N-terminal signal peptide occupies residues 1-18 (MNTMITFLVLFVLTAANG). Positions 19 to 77 (APEANERKIPEAIHNEDQSLAEMAEELMFFLQQTEFEAPLLQEEEEAEXAEXRNSRERR) are excised as a propeptide. 3 disulfides stabilise this stretch: Cys78/Cys93, Cys85/Cys98, and Cys92/Cys112.

Belongs to the neurotoxin 14 (magi-1) family. 05 (ICK-7) subfamily. ICK-7 sub-subfamily. As to expression, expressed by the venom gland.

It is found in the secreted. Its function is as follows. Ion channel inhibitor. The sequence is that of U9-barytoxin-Tl1a from Trittame loki (Brush-footed trapdoor spider).